A 352-amino-acid chain; its full sequence is 3-isopropylmalate dehydrogenase (352 aa).

76 to 89 contacts NAD(+); it reads GPKWENLPHEHKPE. Substrate contacts are provided by R96, R106, R134, and D219. The Mg(2+) site is built by D219, D243, and D247. Residue 276 to 288 coordinates NAD(+); sequence GSAPDIAGQNKAN.

The protein belongs to the isocitrate and isopropylmalate dehydrogenases family. LeuB type 1 subfamily. As to quaternary structure, homodimer. Requires Mg(2+) as cofactor. It depends on Mn(2+) as a cofactor.

Its subcellular location is the cytoplasm. The catalysed reaction is (2R,3S)-3-isopropylmalate + NAD(+) = 4-methyl-2-oxopentanoate + CO2 + NADH. It participates in amino-acid biosynthesis; L-leucine biosynthesis; L-leucine from 3-methyl-2-oxobutanoate: step 3/4. Catalyzes the oxidation of 3-carboxy-2-hydroxy-4-methylpentanoate (3-isopropylmalate) to 3-carboxy-4-methyl-2-oxopentanoate. The product decarboxylates to 4-methyl-2 oxopentanoate. The protein is 3-isopropylmalate dehydrogenase of Chlorobium chlorochromatii (strain CaD3).